The sequence spans 305 residues: Oxidoreductase OpS7 (305 aa).

Belongs to the oxidoreductase OpS7 family.

The protein operates within secondary metabolite biosynthesis. Oxidoreductase; part of the gene cluster that mediates the biosynthesis of the bibenzoquinone oosporein, a metabolite required for fungal virulence that acts by evading host immunity to facilitate fungal multiplication in insects. The non-reducing polyketide synthase OpS1 produces orsellinic acid by condensing acetyl-CoA with 3 malonyl-CoA units. Orsellinic acid is then hydroxylated to benzenetriol by the hydroxylase OpS4. The intermediate is oxidized either nonenzymatically to 5,5'-dideoxy-oosporein or enzymatically to benzenetetrol by the oxidoreductase OpS7. The latter is further dimerized to oosporein by the catalase OpS5. OpS6 probably functions en route for protecting cells against oxidative stress by scavenging any leaked free radical form of benzenetetrol by activating the thiol group of glutathione. The protein is Oxidoreductase OpS7 of Beauveria bassiana (strain ARSEF 2860) (White muscardine disease fungus).